A 335-amino-acid chain; its full sequence is Fructose-1,6-bisphosphatase class 1 (335 aa).

Mg(2+)-binding residues include glutamate 92, aspartate 114, leucine 116, and aspartate 117. Substrate contacts are provided by residues 117 to 120, asparagine 210, tyrosine 242, and lysine 274; that span reads DGSS. Glutamate 280 contacts Mg(2+).

Belongs to the FBPase class 1 family. Homotetramer. It depends on Mg(2+) as a cofactor.

The protein localises to the cytoplasm. The enzyme catalyses beta-D-fructose 1,6-bisphosphate + H2O = beta-D-fructose 6-phosphate + phosphate. It participates in carbohydrate biosynthesis; gluconeogenesis. In Lawsonia intracellularis (strain PHE/MN1-00), this protein is Fructose-1,6-bisphosphatase class 1.